The sequence spans 191 residues: Large ribosomal subunit protein uL6A (191 aa).

This sequence belongs to the universal ribosomal protein uL6 family. In terms of assembly, component of the large ribosomal subunit (LSU). Mature yeast ribosomes consist of a small (40S) and a large (60S) subunit. The 40S small subunit contains 1 molecule of ribosomal RNA (18S rRNA) and 33 different proteins (encoded by 57 genes). The large 60S subunit contains 3 rRNA molecules (25S, 5.8S and 5S rRNA) and 46 different proteins (encoded by 81 genes). uL6 lines the binding pocket for eukaryotic elongation factor 2 (eEF2).

It is found in the cytoplasm. Functionally, component of the ribosome, a large ribonucleoprotein complex responsible for the synthesis of proteins in the cell. The small ribosomal subunit (SSU) binds messenger RNAs (mRNAs) and translates the encoded message by selecting cognate aminoacyl-transfer RNA (tRNA) molecules. The large subunit (LSU) contains the ribosomal catalytic site termed the peptidyl transferase center (PTC), which catalyzes the formation of peptide bonds, thereby polymerizing the amino acids delivered by tRNAs into a polypeptide chain. The nascent polypeptides leave the ribosome through a tunnel in the LSU and interact with protein factors that function in enzymatic processing, targeting, and the membrane insertion of nascent chains at the exit of the ribosomal tunnel. The sequence is that of Large ribosomal subunit protein uL6A from Saccharomyces cerevisiae (strain ATCC 204508 / S288c) (Baker's yeast).